A 131-amino-acid polypeptide reads, in one-letter code: Small ribosomal subunit protein uS11 (131 aa).

The protein belongs to the universal ribosomal protein uS11 family. Part of the 30S ribosomal subunit. Interacts with proteins S7 and S18. Binds to IF-3.

In terms of biological role, located on the platform of the 30S subunit, it bridges several disparate RNA helices of the 16S rRNA. Forms part of the Shine-Dalgarno cleft in the 70S ribosome. The sequence is that of Small ribosomal subunit protein uS11 from Helicobacter pylori (strain G27).